The following is a 184-amino-acid chain: GTP-binding protein Rheb (184 aa).

Lysine 8 participates in a covalent cross-link: Glycyl lysine isopeptide (Lys-Gly) (interchain with G-Cter in ubiquitin). Residues serine 16, valine 17, glycine 18, lysine 19, serine 20, serine 21, valine 32, and aspartate 33 each coordinate GDP. Serine 16, valine 17, glycine 18, lysine 19, serine 20, serine 21, valine 32, aspartate 33, tyrosine 35, proline 37, threonine 38, glycine 63, asparagine 119, lysine 120, and aspartate 122 together coordinate GTP. Serine 20 contacts Mg(2+). The Effector region motif lies at 35–43; it reads YDPTIENTF. Threonine 38 is a Mg(2+) binding site. A GDP-binding site is contributed by asparagine 119. Aspartate 122 serves as a coordination point for GDP. Serine 130 carries the phosphoserine; by MAPKAPK5 modification. Alanine 150 is a GDP binding site. Alanine 150 contributes to the GTP binding site. Cysteine 181 carries the cysteine methyl ester modification. Cysteine 181 carries S-farnesyl cysteine lipidation. Residues 182–184 constitute a propeptide, removed in mature form; sequence SVM.

It belongs to the small GTPase superfamily. Rheb family. Associates with the mTORC1 complex (MTOR, MLST8 and RPTOR) in a guanyl nucleotide-independent manner. Interacts with TSC2. Interacts with MCRS1; the interaction maintains RHEB at the lysosome in its active GTP-bound form and prevents its interaction with the mTORC1 complex inhibitor TSC2, ensuring activation of the mTORC1 complex by RHEB. Interacts (when prenylated) with PDE6D; this promotes release from membranes. Post-translationally, farnesylation is important for efficiently activating mTORC1-mediated signaling. Polyubiquitinated in response to amino acid, promoting its interaction with MTOR and mTORC1 activation. Deubiquitination by ATXN3 promotes recruitment of the TSC-TBC complex and RHEB inactivation by TSC2. Monoubiquitinated at Lys-8 by RNF152, promoting its association with the TSC-TBC complex. Deubiquitinated at Lys-8 by USP4, promoting mTORC1 activation. In terms of processing, phosphorylation by MAPKAPK5 impairs GTP-binding and inactivation.

The protein localises to the endomembrane system. It is found in the lysosome membrane. Its subcellular location is the golgi apparatus membrane. It localises to the endoplasmic reticulum membrane. The protein resides in the cytoplasm. The protein localises to the cytosol. It carries out the reaction GTP + H2O = GDP + phosphate + H(+). With respect to regulation, alternates between an inactive form bound to GDP and an active form bound to GTP. Inactivated by the TSC-TBC complex via the GTPase activating protein (GAP) domain of TSC2. Autoinhibited by Tyr-35, which constrains the active site conformation, restricting the access of the catalytic Asp-65 to the nucleotide-binding pocket. Its function is as follows. Small GTPase that acts as an allosteric activator of the canonical mTORC1 complex, an evolutionarily conserved central nutrient sensor that stimulates anabolic reactions and macromolecule biosynthesis to promote cellular biomass generation and growth. In response to nutrients, growth factors or amino acids, specifically activates the protein kinase activity of MTOR, the catalytic component of the mTORC1 complex: acts by causing a conformational change that allows the alignment of residues in the active site of MTOR, thereby enhancing the phosphorylation of ribosomal protein S6 kinase (RPS6KB1 and RPS6KB2) and EIF4EBP1 (4E-BP1). RHEB is also required for localization of the TSC-TBC complex to lysosomal membranes. In response to starvation, RHEB is inactivated by the TSC-TBC complex, preventing activation of mTORC1. Has low intrinsic GTPase activity. The chain is GTP-binding protein Rheb from Mus musculus (Mouse).